The sequence spans 143 residues: MKTFLTEQQIKVLVLRAKGLKQSEIAKILKTTRANVSILEKRALEKIEKAKNTLLLWEQINSKVNVNVKAGEDIFSVPEKLFKKADEAGVKVPYSTAEIIAFLVEHAPIENRLAKRDFVIFLDSKNRLRISDCLINLDEIEKK.

Belongs to the Tfx family.

Its function is as follows. Putative transcriptional regulator. The polypeptide is Putative transcriptional regulatory protein PH0763 (Pyrococcus horikoshii (strain ATCC 700860 / DSM 12428 / JCM 9974 / NBRC 100139 / OT-3)).